The following is a 205-amino-acid chain: Small ribosomal subunit protein uS4 (205 aa).

Basic and acidic residues predominate over residues 1-16 (MSKRETTKYKIDRRMG). The disordered stretch occupies residues 1 to 46 (MSKRETTKYKIDRRMGENIWGRPKSPVNRRDYGPGQHGQRRKGKLS). Positions 94–157 (SRLDAVIYRA…KQLVLVLESV (64 aa)) constitute an S4 RNA-binding domain.

Belongs to the universal ribosomal protein uS4 family. In terms of assembly, part of the 30S ribosomal subunit. Contacts protein S5. The interaction surface between S4 and S5 is involved in control of translational fidelity.

One of the primary rRNA binding proteins, it binds directly to 16S rRNA where it nucleates assembly of the body of the 30S subunit. In terms of biological role, with S5 and S12 plays an important role in translational accuracy. The polypeptide is Small ribosomal subunit protein uS4 (Bartonella quintana (strain Toulouse) (Rochalimaea quintana)).